Here is a 211-residue protein sequence, read N- to C-terminus: Ribonuclease HII (211 aa).

One can recognise an RNase H type-2 domain in the interval 16-205 (APVCGVDEAG…VKAALAAAAV (190 aa)). Residues Asp22, Glu23, and Asp114 each coordinate a divalent metal cation.

Belongs to the RNase HII family. Mn(2+) is required as a cofactor. The cofactor is Mg(2+).

Its subcellular location is the cytoplasm. It catalyses the reaction Endonucleolytic cleavage to 5'-phosphomonoester.. Endonuclease that specifically degrades the RNA of RNA-DNA hybrids. The polypeptide is Ribonuclease HII (rnhB) (Caulobacter vibrioides (strain ATCC 19089 / CIP 103742 / CB 15) (Caulobacter crescentus)).